The chain runs to 379 residues: Alcohol dehydrogenase 1 (379 aa).

The Zn(2+) site is built by Cys-47, Thr-49, His-69, Cys-99, Cys-102, Cys-105, Cys-113, and Cys-177. Thr-49 and His-69 together coordinate an alcohol. Thr-49 lines the NAD(+) pocket. Residues 202–207 (GLGAVG), Asp-226, Arg-231, Thr-272, Val-295, 295–297 (VGV), Phe-322, and Arg-372 each bind NAD(+).

It belongs to the zinc-containing alcohol dehydrogenase family. As to quaternary structure, homodimer. Zn(2+) is required as a cofactor.

Its subcellular location is the cytoplasm. The catalysed reaction is a primary alcohol + NAD(+) = an aldehyde + NADH + H(+). The enzyme catalyses a secondary alcohol + NAD(+) = a ketone + NADH + H(+). The chain is Alcohol dehydrogenase 1 (ADH1) from Zea mays (Maize).